The following is a 136-amino-acid chain: DNA-directed RNA polymerase subunit omega (136 aa).

The protein belongs to the RNA polymerase subunit omega family. In terms of assembly, the RNAP catalytic core consists of 2 alpha, 1 beta, 1 beta' and 1 omega subunit. When a sigma factor is associated with the core the holoenzyme is formed, which can initiate transcription.

It catalyses the reaction RNA(n) + a ribonucleoside 5'-triphosphate = RNA(n+1) + diphosphate. Functionally, promotes RNA polymerase assembly. Latches the N- and C-terminal regions of the beta' subunit thereby facilitating its interaction with the beta and alpha subunits. This chain is DNA-directed RNA polymerase subunit omega, found in Methylorubrum extorquens (strain CM4 / NCIMB 13688) (Methylobacterium extorquens).